The following is a 337-amino-acid chain: Glyceraldehyde-3-phosphate dehydrogenase 2, cytosolic (337 aa).

Residues 1–151 (MGKIKIGING…YTSDVNIVSN (151 aa)) are binding to NAD. Residues 13 to 14 (RI), Asp-35, and Arg-82 each bind NAD(+). The catalytic stretch occupies residues 152 to 337 (ASCTTNCLAP…DLIRHMFKTQ (186 aa)). D-glyceraldehyde 3-phosphate is bound by residues 153-155 (SCT), Thr-184, 213-214 (TG), and Arg-236. Catalysis depends on Cys-154, which acts as the Nucleophile. Residue Asn-318 coordinates NAD(+).

The protein belongs to the glyceraldehyde-3-phosphate dehydrogenase family. As to quaternary structure, homotetramer. In terms of tissue distribution, developing seeds, seedling roots and shoots, and embryo.

The protein resides in the cytoplasm. It carries out the reaction D-glyceraldehyde 3-phosphate + phosphate + NAD(+) = (2R)-3-phospho-glyceroyl phosphate + NADH + H(+). It functions in the pathway carbohydrate degradation; glycolysis; pyruvate from D-glyceraldehyde 3-phosphate: step 1/5. Its function is as follows. Key enzyme in glycolysis that catalyzes the first step of the pathway by converting D-glyceraldehyde 3-phosphate (G3P) into 3-phospho-D-glyceroyl phosphate. Essential for the maintenance of cellular ATP levels and carbohydrate metabolism. The protein is Glyceraldehyde-3-phosphate dehydrogenase 2, cytosolic (GAPC2) of Zea mays (Maize).